The chain runs to 465 residues: Fusarisetin A cluster transcription factor fsa5 (465 aa).

Residues 13–47 constitute a DNA-binding region (zn(2)-C6 fungal-type); sequence CDRCRSHKLKCTVAPENTRSGSSRCTRCIRAQVTC. A disordered region spans residues 58-88; sequence STNVKKADLRSGTNGQETTSMQASTIVPGSP. Positions 68-84 are enriched in polar residues; it reads SGTNGQETTSMQASTIV.

The protein localises to the nucleus. In terms of biological role, transcription activator that specifically regulates the expression of the gene cluster that mediates the biosynthesis of fusarisetin A. This Fusarium sp. (strain FN080326) protein is Fusarisetin A cluster transcription factor fsa5.